A 667-amino-acid chain; its full sequence is Leucine aminopeptidase 2 (667 aa).

A peptide-binding positions include 188–190 and 318–323; these read QCQ and PYGGME. Zn(2+) is bound at residue histidine 347. The active-site Proton acceptor is the glutamate 348. 2 residues coordinate Zn(2+): histidine 351 and glutamate 370. The active-site Proton donor is the tyrosine 436.

This sequence belongs to the peptidase M1 family. Zn(2+) is required as a cofactor.

It localises to the cytoplasm. Its subcellular location is the nucleus. It carries out the reaction an epoxide + H2O = an ethanediol. In terms of biological role, aminopeptidase that preferentially cleaves di- and tripeptides. Also has low epoxide hydrolase activity (in vitro). Can hydrolyze the epoxide leukotriene LTA(4) but it forms preferentially 5,6-dihydroxy-7,9,11,14-eicosatetraenoic acid rather than the cytokine leukotriene B(4) as the product compared to the homologous mammalian enzyme (in vitro). The polypeptide is Leucine aminopeptidase 2 (ara-1) (Neurospora crassa (strain ATCC 24698 / 74-OR23-1A / CBS 708.71 / DSM 1257 / FGSC 987)).